Here is a 79-residue protein sequence, read N- to C-terminus: Protein FAM236A (79 aa).

The protein belongs to the FAM236 family.

The polypeptide is Protein FAM236A (Homo sapiens (Human)).